The sequence spans 255 residues: MLRVENLSIRRGGKTVLEGLELELRPGEMLGVLGPNGAGKSTLLGALCGELEPAEGLVLLDERGLDDWPGVARAQRLAVLPQSSSLGFAFPVEAVVGFGRLPHSSGRERDVQIVAEALAAADASHLAGRSYLALSGGERQRVHLARVLAQLWPGEPGQVLLLDEPTSALDPLHQHTTLQAVHDFARRGASVLVILHDLNLAARYCDRLLLLQNGRPHLLGTPEEVLRPEPLRAVFGLEVLVQRHPERGHPLIVAR.

One can recognise an ABC transporter domain in the interval 2–238 (LRVENLSIRR…EPLRAVFGLE (237 aa)). 34–41 (GPNGAGKS) contributes to the ATP binding site.

It belongs to the ABC transporter superfamily. Heme (hemin) importer (TC 3.A.1.14.5) family. The complex is composed of two ATP-binding proteins (HmuV), two transmembrane proteins (HmuU) and a solute-binding protein (HmuT).

It is found in the cell inner membrane. In terms of biological role, part of the ABC transporter complex HmuTUV involved in hemin import. Responsible for energy coupling to the transport system. The sequence is that of Hemin import ATP-binding protein HmuV from Pseudomonas aeruginosa (strain ATCC 15692 / DSM 22644 / CIP 104116 / JCM 14847 / LMG 12228 / 1C / PRS 101 / PAO1).